A 140-amino-acid polypeptide reads, in one-letter code: Large-conductance mechanosensitive channel (140 aa).

2 consecutive transmembrane segments (helical) span residues 9–29 and 86–106; these read AFAL…GAAF and GSFL…FLMV.

Belongs to the MscL family. In terms of assembly, homopentamer.

Its subcellular location is the cell inner membrane. Channel that opens in response to stretch forces in the membrane lipid bilayer. May participate in the regulation of osmotic pressure changes within the cell. The polypeptide is Large-conductance mechanosensitive channel (Anaeromyxobacter dehalogenans (strain 2CP-1 / ATCC BAA-258)).